Reading from the N-terminus, the 103-residue chain is UPF0145 protein CYA_2258 (103 aa).

It belongs to the UPF0145 family.

The chain is UPF0145 protein CYA_2258 from Synechococcus sp. (strain JA-3-3Ab) (Cyanobacteria bacterium Yellowstone A-Prime).